The following is a 465-amino-acid chain: Glutamate--tRNA ligase (465 aa).

Residues 11–21 carry the 'HIGH' region motif; the sequence is PSPTGYLHIGG. Positions 243-247 match the 'KMSKS' region motif; that stretch reads KLSKR. ATP is bound at residue Lys246.

Belongs to the class-I aminoacyl-tRNA synthetase family. Glutamate--tRNA ligase type 1 subfamily. In terms of assembly, monomer.

It localises to the cytoplasm. The catalysed reaction is tRNA(Glu) + L-glutamate + ATP = L-glutamyl-tRNA(Glu) + AMP + diphosphate. Functionally, catalyzes the attachment of glutamate to tRNA(Glu) in a two-step reaction: glutamate is first activated by ATP to form Glu-AMP and then transferred to the acceptor end of tRNA(Glu). The sequence is that of Glutamate--tRNA ligase from Aromatoleum aromaticum (strain DSM 19018 / LMG 30748 / EbN1) (Azoarcus sp. (strain EbN1)).